The chain runs to 265 residues: MATCSAACARPAVVVFASPAAARRRAASSVYLPGRPLRGGGVVRCSAGPVSGGMISKKVAELWAAARSASPVAVIAAVAGAAVVYKVGSSLLAPPPPPARPREEPSEEAPPPPEPVQVGEITAEELLQYDGSDPEKPLLMAIKGQIYDVSQSRLFYGPGGPYALFAGKDASRALAKMSFEPQDLTDDISGLSLLELSALQDWEYKFSSKYVKVGTIKKVLVEQGGDSTADAIEEAAVDGEDSILTAKMSNQLLYEEEMEVGSDDP.

A helical transmembrane segment spans residues 63–85 (WAAARSASPVAVIAAVAGAAVVY). The interval 94–116 (PPPPPARPREEPSEEAPPPPEPV) is disordered. Residues 118–217 (VGEITAEELL…SKYVKVGTIK (100 aa)) form the Cytochrome b5 heme-binding domain. A steroid-binding region spans residues 120-217 (EITAEELLQY…SKYVKVGTIK (98 aa)).

It belongs to the cytochrome b5 family. MAPR subfamily.

Its subcellular location is the cell membrane. Its function is as follows. Binds multiple steroid compounds. This Oryza sativa subsp. japonica (Rice) protein is Membrane steroid-binding protein 2.